The following is a 31-amino-acid chain: PLFDKRQRCCNGRRGCSSRWCRDHSRCCGRR.

A propeptide spanning residues 1 to 6 (PLFDKR) is cleaved from the precursor. Gln7 bears the Pyrrolidone carboxylic acid mark. 3 cysteine pairs are disulfide-bonded: Cys9/Cys21, Cys10/Cys27, and Cys16/Cys28. Cys28 is modified (cysteine amide).

It belongs to the conotoxin M superfamily. SmIIIA' is a putative isoform where the N-terminal AA is missing. Expressed by the venom duct.

It localises to the secreted. In terms of biological role, mu-conotoxins block voltage-gated sodium channels (Nav). This toxin blocks rNav1.5/SCN5A (IC(50) is 1.3 uM), rNav1.6/SCN8A (IC(50) is 160 nM), rNav1.7/SCN9A (IC(50) is 1.3 uM), rNav1.1/SCN1A (K(d) is 3.8 nM), rNav1.2/SCN2A (K(d) is 1.3 nM), rNav1.4/SCN4A (K(d) is 0.22 nM), rNav1.6/SCN8A (K(d) is 69 nM), and rNav1.7/SCN9A (K(d) is 260 nM). This toxin is very potent but weakly discriminating among sodium channels. The block of these channels is modified when beta-subunits are coexpressed with alpha subunits. Hence, blocks of channels containing beta-1 and beta-3 subunits are more potent (compared to channels without beta subunits), whereas blocks of channels containing beta-2 and beta-4 subunits are less potent (compared to channels without beta subunits). This chain is Mu-conotoxin SmIIIA, found in Conus stercusmuscarum (Fly-specked cone).